Consider the following 566-residue polypeptide: Alpha-N-acetylgalactosaminide alpha-2,6-sialyltransferase 1 (566 aa).

Over 1 to 16 the chain is Cytoplasmic; sequence MGFLIRRLPKDSRIFR. The helical; Signal-anchor for type II membrane protein transmembrane segment at 17 to 37 threads the bilayer; it reads WLLILTVFSFIITSFSALFGM. Residues 38–566 lie on the Lumenal side of the membrane; it reads EKSIFRQLKI…ENIMKLYQRS (529 aa). Asn-66 and Asn-132 each carry an N-linked (GlcNAc...) asparagine glycan. A disordered region spans residues 138–161; the sequence is ASVVERTKEKTTARPVPGVGEADG. An N-linked (GlcNAc...) asparagine glycan is attached at Asn-192. Residues 247-254 form repeat 1; sequence SSSPVSTC. Residues 247–337 form a 2 X 8 AA repeats of S-S-S-X-V-S-T-C region; the sequence is SSSPVSTCSE…ANSSSNVSTC (91 aa). 2 disulfides stabilise this stretch: Cys-254–Cys-337 and Cys-340–Cys-508. N-linked (GlcNAc...) asparagine glycans are attached at residues Asn-275, Asn-286, Asn-306, Asn-329, and Asn-333. The stretch at 330–337 is repeat 2; that stretch reads SSSNVSTC.

This sequence belongs to the glycosyltransferase 29 family. In terms of tissue distribution, heart, kidney, testes, brain, liver and lung.

The protein localises to the golgi apparatus membrane. It catalyses the reaction a beta-D-galactosyl-(1-&gt;3)-N-acetyl-alpha-D-galactosaminyl derivative + CMP-N-acetyl-beta-neuraminate = a beta-D-galactosyl-(1-&gt;3)-[N-acetyl-alpha-neuraminyl-(2-&gt;6)]-N-acetyl-alpha-D-galactosaminyl derivative + CMP + H(+). The enzyme catalyses a 3-O-[N-acetyl-alpha-D-galactosaminyl]-L-seryl-[protein] + CMP-N-acetyl-beta-neuraminate = a 3-O-[N-acetyl-alpha-neuraminosyl-(2-&gt;6)-N-acetyl-alpha-D-galactosaminyl]-L-seryl-[protein] + CMP + H(+). The catalysed reaction is a 3-O-[N-acetyl-alpha-D-galactosaminyl]-L-threonyl-[protein] + CMP-N-acetyl-beta-neuraminate = a 3-O-[N-acetyl-alpha-neuraminosyl-(2-&gt;6)-N-acetyl-alpha-D-galactosaminyl]-L-threonyl-[protein] + CMP + H(+). It carries out the reaction a 3-O-[beta-D-galactosyl-(1-&gt;3)-N-acetyl-alpha-D-galactosaminyl]-L-seryl-[protein] + CMP-N-acetyl-beta-neuraminate = a 3-O-{beta-D-galactosyl-(1-&gt;3)-[N-acetyl-alpha-neuraminosyl-(2-&gt;6)]-N-acetyl-alpha-D-galactosaminyl}-L-seryl-[protein] + CMP + H(+). It catalyses the reaction a 3-O-[beta-D-galactosyl-(1-&gt;3)-N-acetyl-alpha-D-galactosaminyl]-L-threonyl-[protein] + CMP-N-acetyl-beta-neuraminate = a 3-O-{beta-D-galactosyl-(1-&gt;3)-[N-acetyl-alpha-neuraminosyl-(2-&gt;6)]-N-acetyl-alpha-D-galactosaminyl}-L-threonyl-[protein] + CMP + H(+). The enzyme catalyses a 3-O-[N-acetyl-alpha-neuraminyl-(2-&gt;3)-beta-D-galactosyl-(1-&gt;3)-N-acetyl-alpha-D-galactosaminyl]-L-threonyl-[protein] + CMP-N-acetyl-beta-neuraminate = a 3-O-{alpha-Neu5Ac-(2-&gt;3)-beta-D-Gal-(1-&gt;3)-[alpha-Neu5Ac-(2-&gt;6)]-alpha-D-GalNAc}-L-threonyl-[protein] + CMP + H(+). It participates in protein modification; protein glycosylation. Protein sialyltransferase specifically expressed in goblet cells that plays a key role in intestinal host-commensal homeostasis. Conjugates sialic acid with an alpha-2-6 linkage to N-acetylgalactosamine (GalNAc) glycan chains linked to serine or threonine in glycoproteins. Generates sialylated T and Tn antigens.. This Gallus gallus (Chicken) protein is Alpha-N-acetylgalactosaminide alpha-2,6-sialyltransferase 1 (ST6GALNAC1).